We begin with the raw amino-acid sequence, 337 residues long: uncharacterized protein (337 aa).

This sequence belongs to the mimivirus R69 family.

This is an uncharacterized protein from Acanthamoeba polyphaga mimivirus (APMV).